A 274-amino-acid chain; its full sequence is Diaminopimelate epimerase (274 aa).

Substrate is bound by residues asparagine 11, glutamine 44, and asparagine 64. Residue cysteine 73 is the Proton donor of the active site. Residues 74-75, asparagine 157, asparagine 190, and 208-209 each bind substrate; these read GN and ER. The active-site Proton acceptor is the cysteine 217. Residue 218–219 participates in substrate binding; it reads GS.

Belongs to the diaminopimelate epimerase family. Homodimer.

Its subcellular location is the cytoplasm. It carries out the reaction (2S,6S)-2,6-diaminopimelate = meso-2,6-diaminopimelate. The protein operates within amino-acid biosynthesis; L-lysine biosynthesis via DAP pathway; DL-2,6-diaminopimelate from LL-2,6-diaminopimelate: step 1/1. Functionally, catalyzes the stereoinversion of LL-2,6-diaminopimelate (L,L-DAP) to meso-diaminopimelate (meso-DAP), a precursor of L-lysine and an essential component of the bacterial peptidoglycan. The chain is Diaminopimelate epimerase from Pasteurella multocida (strain Pm70).